The primary structure comprises 542 residues: Bifunctional pantoate ligase/cytidylate kinase (542 aa).

The interval M1–L280 is pantoate--beta-alanine ligase. ATP is bound at residue M28–H35. Catalysis depends on H35, which acts as the Proton donor. (R)-pantoate is bound at residue Q59. Residue Q59 coordinates beta-alanine. G150 to D153 is an ATP binding site. A (R)-pantoate-binding site is contributed by Q156. ATP-binding positions include V179 and C187 to R190. Residues L281–Q542 are cytidylate kinase. The tract at residues G287–P311 is disordered.

The protein in the N-terminal section; belongs to the pantothenate synthetase family. It in the C-terminal section; belongs to the cytidylate kinase family. Type 1 subfamily.

It is found in the cytoplasm. It catalyses the reaction (R)-pantoate + beta-alanine + ATP = (R)-pantothenate + AMP + diphosphate + H(+). The enzyme catalyses CMP + ATP = CDP + ADP. It carries out the reaction dCMP + ATP = dCDP + ADP. The protein operates within cofactor biosynthesis; (R)-pantothenate biosynthesis; (R)-pantothenate from (R)-pantoate and beta-alanine: step 1/1. Catalyzes the condensation of pantoate with beta-alanine in an ATP-dependent reaction via a pantoyl-adenylate intermediate. In terms of biological role, catalyzes the transfer of a phosphate group from ATP to either CMP or dCMP to form CDP or dCDP and ADP, respectively. In Synechococcus sp. (strain JA-2-3B'a(2-13)) (Cyanobacteria bacterium Yellowstone B-Prime), this protein is Bifunctional pantoate ligase/cytidylate kinase.